Here is a 240-residue protein sequence, read N- to C-terminus: Ubiquinone biosynthesis O-methyltransferase (240 aa).

Positions 36, 66, 87, and 129 each coordinate S-adenosyl-L-methionine.

This sequence belongs to the methyltransferase superfamily. UbiG/COQ3 family.

It carries out the reaction a 3-demethylubiquinol + S-adenosyl-L-methionine = a ubiquinol + S-adenosyl-L-homocysteine + H(+). The enzyme catalyses a 3-(all-trans-polyprenyl)benzene-1,2-diol + S-adenosyl-L-methionine = a 2-methoxy-6-(all-trans-polyprenyl)phenol + S-adenosyl-L-homocysteine + H(+). The protein operates within cofactor biosynthesis; ubiquinone biosynthesis. In terms of biological role, O-methyltransferase that catalyzes the 2 O-methylation steps in the ubiquinone biosynthetic pathway. In Pelagibacter ubique (strain HTCC1062), this protein is Ubiquinone biosynthesis O-methyltransferase.